Consider the following 219-residue polypeptide: NADH-quinone oxidoreductase subunit C (219 aa).

It belongs to the complex I 30 kDa subunit family. NDH-1 is composed of 14 different subunits. Subunits NuoB, C, D, E, F, and G constitute the peripheral sector of the complex.

It is found in the cell inner membrane. The catalysed reaction is a quinone + NADH + 5 H(+)(in) = a quinol + NAD(+) + 4 H(+)(out). Functionally, NDH-1 shuttles electrons from NADH, via FMN and iron-sulfur (Fe-S) centers, to quinones in the respiratory chain. The immediate electron acceptor for the enzyme in this species is believed to be ubiquinone. Couples the redox reaction to proton translocation (for every two electrons transferred, four hydrogen ions are translocated across the cytoplasmic membrane), and thus conserves the redox energy in a proton gradient. This chain is NADH-quinone oxidoreductase subunit C, found in Methylorubrum extorquens (strain PA1) (Methylobacterium extorquens).